A 334-amino-acid chain; its full sequence is Chitin synthase export chaperone (334 aa).

The next 7 helical transmembrane spans lie at Ile-49–Met-69, Ile-85–Gly-105, Gly-123–Tyr-143, Leu-159–Leu-179, Val-185–Met-205, Leu-220–Phe-240, and Ile-244–Leu-264.

Belongs to the CHS7 family.

The protein resides in the endoplasmic reticulum membrane. Its function is as follows. Chaperone required for the export of the chitin synthase chs3 from the endoplasmic reticulum. Plays a critical role in cell wall integrity and virulence. This Fusarium oxysporum f. sp. lycopersici (strain 4287 / CBS 123668 / FGSC 9935 / NRRL 34936) (Fusarium vascular wilt of tomato) protein is Chitin synthase export chaperone.